The sequence spans 380 residues: Cytochrome b (380 aa).

A run of 4 helical transmembrane segments spans residues 34 to 54, 78 to 99, 114 to 134, and 179 to 199; these read FGSL…LLAM, WLIR…FLHI, WNTG…GYVL, and FFAL…THLM. Residues His-84 and His-98 each coordinate heme b. Heme b is bound by residues His-183 and His-197. His-202 contacts a ubiquinone. 4 helical membrane passes run 227-247, 289-309, 321-341, and 348-368; these read LKDI…ALFS, LGGV…PFLH, LSQT…WVGS, and FIII…ILFP.

Belongs to the cytochrome b family. The cytochrome bc1 complex contains 11 subunits: 3 respiratory subunits (MT-CYB, CYC1 and UQCRFS1), 2 core proteins (UQCRC1 and UQCRC2) and 6 low-molecular weight proteins (UQCRH/QCR6, UQCRB/QCR7, UQCRQ/QCR8, UQCR10/QCR9, UQCR11/QCR10 and a cleavage product of UQCRFS1). This cytochrome bc1 complex then forms a dimer. Heme b is required as a cofactor.

Its subcellular location is the mitochondrion inner membrane. Functionally, component of the ubiquinol-cytochrome c reductase complex (complex III or cytochrome b-c1 complex) that is part of the mitochondrial respiratory chain. The b-c1 complex mediates electron transfer from ubiquinol to cytochrome c. Contributes to the generation of a proton gradient across the mitochondrial membrane that is then used for ATP synthesis. In Tragopan satyra (Satyr tragopan), this protein is Cytochrome b (MT-CYB).